The chain runs to 393 residues: Transcription factor bHLH112 (393 aa).

2 disordered regions span residues 248–277 (TRAQ…SPLP) and 332–356 (KQGA…NENH). Positions 254–265 (SLKRAKDNESAA) are enriched in basic and acidic residues. The 50-residue stretch at 270 to 319 (VTTPSPLPTFKVRKENLRDQITSLQQLVSPFGKTDTASVLQEAIEYIKFL) folds into the bHLH domain. Positions 332-347 (KQGASNQQQQQISGKS) are enriched in low complexity.

As to quaternary structure, homodimer.

It localises to the nucleus. The sequence is that of Transcription factor bHLH112 (BHLH112) from Arabidopsis thaliana (Mouse-ear cress).